The sequence spans 87 residues: MDNYGELFNFFMKCVSEDFGRTVNDIKVIGPDHPMFETYAVMGNEDGQWYTVKVVINMFTAESYVKLSSKVYHDNDEIAEEYFNNMK.

This is an uncharacterized protein from Enterobacteria phage T4 (Bacteriophage T4).